A 349-amino-acid chain; its full sequence is S-adenosylmethionine:tRNA ribosyltransferase-isomerase (349 aa).

Belongs to the QueA family. As to quaternary structure, monomer.

It is found in the cytoplasm. It catalyses the reaction 7-aminomethyl-7-carbaguanosine(34) in tRNA + S-adenosyl-L-methionine = epoxyqueuosine(34) in tRNA + adenine + L-methionine + 2 H(+). It participates in tRNA modification; tRNA-queuosine biosynthesis. In terms of biological role, transfers and isomerizes the ribose moiety from AdoMet to the 7-aminomethyl group of 7-deazaguanine (preQ1-tRNA) to give epoxyqueuosine (oQ-tRNA). The protein is S-adenosylmethionine:tRNA ribosyltransferase-isomerase of Ruegeria sp. (strain TM1040) (Silicibacter sp.).